Reading from the N-terminus, the 549-residue chain is Arginine--tRNA ligase (549 aa).

A 'HIGH' region motif is present at residues 132-142 (ANPTGPLHLAH).

Belongs to the class-I aminoacyl-tRNA synthetase family. In terms of assembly, monomer.

It localises to the cytoplasm. The enzyme catalyses tRNA(Arg) + L-arginine + ATP = L-arginyl-tRNA(Arg) + AMP + diphosphate. The polypeptide is Arginine--tRNA ligase (Renibacterium salmoninarum (strain ATCC 33209 / DSM 20767 / JCM 11484 / NBRC 15589 / NCIMB 2235)).